The following is a 116-amino-acid chain: Iron-sulfur cluster insertion protein ErpA (116 aa).

Iron-sulfur cluster is bound by residues Cys-44, Cys-108, and Cys-110.

The protein belongs to the HesB/IscA family. Homodimer. Iron-sulfur cluster serves as cofactor.

Functionally, required for insertion of 4Fe-4S clusters for at least IspG. The sequence is that of Iron-sulfur cluster insertion protein ErpA from Shewanella baltica (strain OS223).